A 1420-amino-acid chain; its full sequence is MWNSAENAFSRSTSFKDEIEDEEELRWAALQRLPTYSRIRRGIFRDMVGEPKEIQIGNLEASEQRLLLDRLVNSVENDPEQFFARVRKRFDAVDLKFPKIEVRFQNLMVESFVHVGSRALPTIPNFIINMAEGLLRNIHVIGGKRNKLTILDGISGVIRPSRLTLLLGPPSSGKTTLLLALAGRLGTNLQTSGKITYNGYDLKEIIAPRTSAYVSQQDWHVAEMTVRQTLEFAGRCQGVGFKYDMLLELARREKLAGIVPDEDLDIFMKSLALGGMETSLVVEYVMKILGLDTCADTLVGDEMIKGISGGQKKRLTTGELLVGPARVLFMDEISNGLDSSTTHQIIMYMRHSTHALEGTTVISLLQPSPETYELFDDVILMSEGQIIYQGPRDEVLDFFSSLGFTCPDRKNVADFLQEVTSKKDQQQYWSVPFRPYRYVPPGKFAEAFRSYPTGKKLAKKLEVPFDKRFNHSAALSTSQYGVKKSELLKINFAWQKQLMKQNAFIYVFKFVQLLLVALITMTVFCRTTMHHNTIDDGNIYLGSLYFSMVIILFNGFTEVPMLVAKLPVLYKHRDLHFYPSWAYTLPSWLLSIPTSIIESATWVAVTYYTIGYDPLFSRFLQQFLLYFSLHQMSLGLFRVMGSLGRHMIVANTFGSFAMLVVMTLGGFIISRDSIPSWWIWGYWISPLMYAQNAASVNEFLGHNWQKTAGNHTSDSLGLALLKERSLFSGNYWYWIGVAALLGYTVLFNILFTLFLAHLNPWGKFQAVVSREELDEREKKRKGDEFVVELREYLQHSGSIHGKYFKNRGMVLPFQPLSLSFSNINYYVDVPLGLKEQGILEDRLQLLVNITGAFRPGVLTALVGVSGAGKTTLMDVLAGRKTGGTIEGDVYISGFPKRQETFARISGYCEQNDVHSPCLTVVESLLFSACLRLPADIDSETQRAFVHEVMELVELTSLSGALVGLPGVDGLSTEQRKRLTIAVELVANPSIVFMDEPTSGLDARAAAIVMRTVRNIVNTGRTIVCTIHQPSIDIFESFDELLFMKRGGELIYAGPLGQKSCELIKYFESIEGVQKIKPGHNPAAWMLDVTASTEEHRLGVDFAEIYRNSNLCQRNKELIEVLSKPSNIAKEIEFPTRYSQSLYSQFVACLWKQNLSYWRNPQYTAVRFFYTVVISLMLGTICWKFGSKRDTQQQLFNAMGSMYAAVLFIGITNATAAQPVVSIERFVSYRERAAGMYSALPFAFAQVFIEFPYVLAQSTIYSTIFYAMAAFEWSAVKFLWYLFFMYFSIMYFTFYGMMTTAITPNHNVASIIAAPFYMLWNLFSGFMIPYKRIPLWWRWYYWANPVAWTLYGLLVSQYGDDERSVKLSDGIHQVMVKQLLEDVMGYKHDFLGVSAIMVVAFCVFFSLVFAFAIKAFNFQRR.

An ABC transporter 1 domain is found at 135-408 (LRNIHVIGGK…FSSLGFTCPD (274 aa)). Position 168–175 (168–175 (GPPSSGKT)) interacts with ATP. Positions 486–699 (ELLKINFAWQ…AQNAASVNEF (214 aa)) constitute an ABC transmembrane type-2 1 domain. 7 helical membrane passes run 504-524 (FIYV…MTVF), 544-564 (LYFS…MLVA), 585-605 (LPSW…WVAV), 623-643 (FLLY…MGSL), 648-668 (IVAN…GGFI), 674-694 (IPSW…QNAA), and 735-755 (IGVA…TLFL). The ABC transporter 2 domain maps to 818–1070 (LSFSNINYYV…ELIKYFESIE (253 aa)). ATP is bound at residue 863 to 870 (GVSGAGKT). The ABC transmembrane type-2 2 domain maps to 1143-1357 (SQFVACLWKQ…TLYGLLVSQY (215 aa)). The next 7 membrane-spanning stretches (helical) occupy residues 1162–1182 (YTAV…TICW), 1202–1222 (YAAV…VVSI), 1235–1255 (MYSA…YVLA), 1277–1297 (FLWY…YGMM), 1307–1327 (VASI…GFMI), 1334–1354 (LWWR…GLLV), and 1392–1412 (VSAI…AFAI).

The protein belongs to the ABC transporter superfamily. ABCG family. PDR (TC 3.A.1.205) subfamily. As to expression, ubiquitous in aerial organs. Higher expression levels in young, expanding tissues than in older tissues. Detected in the epidermal layer.

Its subcellular location is the cell membrane. Functionally, may be a general defense protein. Required for the formation of the cuticle layer of the cell wall. This Arabidopsis thaliana (Mouse-ear cress) protein is ABC transporter G family member 32.